A 100-amino-acid chain; its full sequence is Large ribosomal subunit protein uL23 (100 aa).

It belongs to the universal ribosomal protein uL23 family. Part of the 50S ribosomal subunit. Contacts protein L29, and trigger factor when it is bound to the ribosome.

Functionally, one of the early assembly proteins it binds 23S rRNA. One of the proteins that surrounds the polypeptide exit tunnel on the outside of the ribosome. Forms the main docking site for trigger factor binding to the ribosome. This Escherichia coli O157:H7 protein is Large ribosomal subunit protein uL23.